The primary structure comprises 178 residues: tRNA (cytidine(56)-2'-O)-methyltransferase (178 aa).

Leu88 serves as a coordination point for S-adenosyl-L-methionine.

This sequence belongs to the aTrm56 family. As to quaternary structure, homodimer.

It is found in the cytoplasm. The catalysed reaction is cytidine(56) in tRNA + S-adenosyl-L-methionine = 2'-O-methylcytidine(56) in tRNA + S-adenosyl-L-homocysteine + H(+). Its function is as follows. Specifically catalyzes the AdoMet-dependent 2'-O-ribose methylation of cytidine at position 56 in tRNAs. In Methanopyrus kandleri (strain AV19 / DSM 6324 / JCM 9639 / NBRC 100938), this protein is tRNA (cytidine(56)-2'-O)-methyltransferase.